We begin with the raw amino-acid sequence, 303 residues long: DnaJ homolog subfamily C member 17 (303 aa).

A J domain is found at D11–R76. Disordered regions lie at residues E104–T123 and I150–T170. The residue at position 112 (S112) is a Phosphoserine. Over residues I150–E166 the composition is skewed to basic and acidic residues. Residues K178–G249 form the RRM domain. The residue at position 264 (K264) is an N6-methyllysine.

In terms of tissue distribution, expressed in the thyroid gland.

The protein resides in the cytoplasm. It is found in the nucleus. Functionally, may negatively affect PAX8-induced thyroglobulin/TG transcription. The polypeptide is DnaJ homolog subfamily C member 17 (Dnajc17) (Mus musculus (Mouse)).